The primary structure comprises 612 residues: tRNA 5-methylaminomethyl-2-thiouridine biosynthesis bifunctional protein MnmC (612 aa).

A tRNA (mnm(5)s(2)U34)-methyltransferase region spans residues 1–218 (MITFRGDGLY…KREILEASLE (218 aa)). Residues 244 to 612 (IGAGVAGLAA…VRKLKRGLVR (369 aa)) are FAD-dependent cmnm(5)s(2)U34 oxidoreductase.

It in the N-terminal section; belongs to the methyltransferase superfamily. tRNA (mnm(5)s(2)U34)-methyltransferase family. In the C-terminal section; belongs to the DAO family. It depends on FAD as a cofactor.

The protein localises to the cytoplasm. The catalysed reaction is 5-aminomethyl-2-thiouridine(34) in tRNA + S-adenosyl-L-methionine = 5-methylaminomethyl-2-thiouridine(34) in tRNA + S-adenosyl-L-homocysteine + H(+). Functionally, catalyzes the last two steps in the biosynthesis of 5-methylaminomethyl-2-thiouridine (mnm(5)s(2)U) at the wobble position (U34) in tRNA. Catalyzes the FAD-dependent demodification of cmnm(5)s(2)U34 to nm(5)s(2)U34, followed by the transfer of a methyl group from S-adenosyl-L-methionine to nm(5)s(2)U34, to form mnm(5)s(2)U34. In Campylobacter fetus subsp. fetus (strain 82-40), this protein is tRNA 5-methylaminomethyl-2-thiouridine biosynthesis bifunctional protein MnmC.